A 223-amino-acid polypeptide reads, in one-letter code: Phosphoribosylformylglycinamidine synthase subunit PurQ (223 aa).

The Glutamine amidotransferase type-1 domain occupies 2–223 (KFAVIQFPGS…ASVLKNFVGK (222 aa)). Cysteine 86 functions as the Nucleophile in the catalytic mechanism. Active-site residues include histidine 195 and glutamate 197.

Part of the FGAM synthase complex composed of 1 PurL, 1 PurQ and 2 PurS subunits.

Its subcellular location is the cytoplasm. It carries out the reaction N(2)-formyl-N(1)-(5-phospho-beta-D-ribosyl)glycinamide + L-glutamine + ATP + H2O = 2-formamido-N(1)-(5-O-phospho-beta-D-ribosyl)acetamidine + L-glutamate + ADP + phosphate + H(+). The catalysed reaction is L-glutamine + H2O = L-glutamate + NH4(+). The protein operates within purine metabolism; IMP biosynthesis via de novo pathway; 5-amino-1-(5-phospho-D-ribosyl)imidazole from N(2)-formyl-N(1)-(5-phospho-D-ribosyl)glycinamide: step 1/2. Part of the phosphoribosylformylglycinamidine synthase complex involved in the purines biosynthetic pathway. Catalyzes the ATP-dependent conversion of formylglycinamide ribonucleotide (FGAR) and glutamine to yield formylglycinamidine ribonucleotide (FGAM) and glutamate. The FGAM synthase complex is composed of three subunits. PurQ produces an ammonia molecule by converting glutamine to glutamate. PurL transfers the ammonia molecule to FGAR to form FGAM in an ATP-dependent manner. PurS interacts with PurQ and PurL and is thought to assist in the transfer of the ammonia molecule from PurQ to PurL. This chain is Phosphoribosylformylglycinamidine synthase subunit PurQ, found in Lactococcus lactis subsp. lactis (strain IL1403) (Streptococcus lactis).